We begin with the raw amino-acid sequence, 440 residues long: tRNA(Ile)-lysidine synthase (440 aa).

28-33 is an ATP binding site; the sequence is SGGMDS.

It belongs to the tRNA(Ile)-lysidine synthase family.

It is found in the cytoplasm. The catalysed reaction is cytidine(34) in tRNA(Ile2) + L-lysine + ATP = lysidine(34) in tRNA(Ile2) + AMP + diphosphate + H(+). Functionally, ligates lysine onto the cytidine present at position 34 of the AUA codon-specific tRNA(Ile) that contains the anticodon CAU, in an ATP-dependent manner. Cytidine is converted to lysidine, thus changing the amino acid specificity of the tRNA from methionine to isoleucine. The protein is tRNA(Ile)-lysidine synthase of Xanthomonas axonopodis pv. citri (strain 306).